We begin with the raw amino-acid sequence, 217 residues long: Probable transaldolase (217 aa).

The Schiff-base intermediate with substrate role is filled by K83.

The protein belongs to the transaldolase family. Type 3B subfamily.

The protein resides in the cytoplasm. It catalyses the reaction D-sedoheptulose 7-phosphate + D-glyceraldehyde 3-phosphate = D-erythrose 4-phosphate + beta-D-fructose 6-phosphate. It participates in carbohydrate degradation; pentose phosphate pathway; D-glyceraldehyde 3-phosphate and beta-D-fructose 6-phosphate from D-ribose 5-phosphate and D-xylulose 5-phosphate (non-oxidative stage): step 2/3. Functionally, transaldolase is important for the balance of metabolites in the pentose-phosphate pathway. This is Probable transaldolase from Rhizobium meliloti (strain 1021) (Ensifer meliloti).